Here is a 253-residue protein sequence, read N- to C-terminus: MAGHSKFKNIQHRKGAQDKKRAKVFTKLIREIVTAAKTGSSNNPENNPRLRNALTAARSQNLPKERIDKAINSANDSSNNENYTEIRYEGYAPNGIAIIVEVLTDNKNRTAAEVRSSFTKYGGSLGETGSVNYLFNHCGVIQYPINIASNEDVLEAVIEAGGHDIISDDTTHTIYTDIENFSKVLAFLTGKYGIPEDSYIGWIPLNTIIIDDKEKAEKLLKLVEVLEESDDVQRVFGNYELSDDVYEIIQGEP.

The tract at residues 1-21 (MAGHSKFKNIQHRKGAQDKKR) is disordered.

Belongs to the TACO1 family.

It is found in the cytoplasm. The chain is Probable transcriptional regulatory protein RAF_ORF0717 from Rickettsia africae (strain ESF-5).